Here is a 201-residue protein sequence, read N- to C-terminus: 3-isopropylmalate dehydratase small subunit (201 aa).

The protein belongs to the LeuD family. LeuD type 1 subfamily. Heterodimer of LeuC and LeuD.

It catalyses the reaction (2R,3S)-3-isopropylmalate = (2S)-2-isopropylmalate. It participates in amino-acid biosynthesis; L-leucine biosynthesis; L-leucine from 3-methyl-2-oxobutanoate: step 2/4. In terms of biological role, catalyzes the isomerization between 2-isopropylmalate and 3-isopropylmalate, via the formation of 2-isopropylmaleate. The protein is 3-isopropylmalate dehydratase small subunit of Micrococcus luteus (strain ATCC 4698 / DSM 20030 / JCM 1464 / CCM 169 / CCUG 5858 / IAM 1056 / NBRC 3333 / NCIMB 9278 / NCTC 2665 / VKM Ac-2230) (Micrococcus lysodeikticus).